Here is a 104-residue protein sequence, read N- to C-terminus: MAEGEGWRPPRPCEAYRAEWELCRSAGHFLRHYYVHGERPACGQWRRDLASCREWEERRSAEAQADSLPPGPEGEPRVAGAGPNAVTGILTRNQGTERPHGDTR.

Residues 58–104 (RRSAEAQADSLPPGPEGEPRVAGAGPNAVTGILTRNQGTERPHGDTR) are disordered. A compositionally biased stretch (basic and acidic residues) spans 95–104 (GTERPHGDTR).

The protein belongs to the UPF0545 family. As to quaternary structure, interacts with RTN4 isoform A/Nogo-A; the interaction results in enhanced RTN4-mediated inhibition of AMPA receptor clustering. Also interacts with NCAM1, RANBP2 and CCT8. In terms of processing, rapidly degraded by proteolysis following neuronal stimulation, resulting in increased AMPA receptor clustering.

Its subcellular location is the synapse. The protein resides in the synaptic cleft. In terms of biological role, negatively regulates long-term potentiation and modulates adult synaptic plasticity. Stabilizes the interaction of RTN4 isoform A/Nogo-A with its receptors, inhibiting clustering of postsynaptic AMPA receptors at synaptic sites. Upon neuronal stimulation, degraded at synapses, reducing RTN4 signaling and allowing AMPA receptor clustering at individual synapses. This Bos taurus (Bovine) protein is Synaptic plasticity regulator PANTS.